Here is a 146-residue protein sequence, read N- to C-terminus: 3-dehydroquinate dehydratase (146 aa).

Tyr23 acts as the Proton acceptor in catalysis. Positions 75, 81, and 88 each coordinate substrate. His101 functions as the Proton donor in the catalytic mechanism. Substrate contacts are provided by residues 102-103 (LS) and Arg112.

It belongs to the type-II 3-dehydroquinase family. As to quaternary structure, homododecamer.

The enzyme catalyses 3-dehydroquinate = 3-dehydroshikimate + H2O. Its pathway is metabolic intermediate biosynthesis; chorismate biosynthesis; chorismate from D-erythrose 4-phosphate and phosphoenolpyruvate: step 3/7. In terms of biological role, catalyzes a trans-dehydration via an enolate intermediate. The chain is 3-dehydroquinate dehydratase from Saccharophagus degradans (strain 2-40 / ATCC 43961 / DSM 17024).